Here is a 738-residue protein sequence, read N- to C-terminus: Polyphosphate kinase (738 aa).

The segment at 1-48 (MIGNDRWVTEIETGPVTEARPDTNAREPGDRTPAAPPAATPAATTDQL) is disordered. A compositionally biased stretch (basic and acidic residues) spans 19-30 (ARPDTNAREPGD). ATP is bound at residue Asn91. Mg(2+) contacts are provided by Arg427 and Arg457. Catalysis depends on His487, which acts as the Phosphohistidine intermediate. Residues Tyr520, Arg620, and His648 each contribute to the ATP site.

Belongs to the polyphosphate kinase 1 (PPK1) family. Mg(2+) serves as cofactor. In terms of processing, an intermediate of this reaction is the autophosphorylated ppk in which a phosphate is covalently linked to a histidine residue through a N-P bond.

It catalyses the reaction [phosphate](n) + ATP = [phosphate](n+1) + ADP. Its function is as follows. Catalyzes the reversible transfer of the terminal phosphate of ATP to form a long-chain polyphosphate (polyP). The polypeptide is Polyphosphate kinase (Mycobacterium ulcerans (strain Agy99)).